Consider the following 160-residue polypeptide: Phosphopantetheine adenylyltransferase (160 aa).

Ser-9 provides a ligand contact to substrate. ATP is bound by residues 9–10 (SF) and His-17. The substrate site is built by Lys-41, Ile-73, and Lys-87. ATP is bound by residues 88–90 (GLR), Glu-98, and 122–128 (YSFVSSS).

The protein belongs to the bacterial CoaD family. As to quaternary structure, homohexamer. Mg(2+) serves as cofactor.

It localises to the cytoplasm. The enzyme catalyses (R)-4'-phosphopantetheine + ATP + H(+) = 3'-dephospho-CoA + diphosphate. It participates in cofactor biosynthesis; coenzyme A biosynthesis; CoA from (R)-pantothenate: step 4/5. In terms of biological role, reversibly transfers an adenylyl group from ATP to 4'-phosphopantetheine, yielding dephospho-CoA (dPCoA) and pyrophosphate. The protein is Phosphopantetheine adenylyltransferase of Mycolicibacterium gilvum (strain PYR-GCK) (Mycobacterium gilvum (strain PYR-GCK)).